Here is a 654-residue protein sequence, read N- to C-terminus: Acetyl-coenzyme A synthetase (654 aa).

Residues 193–196 (RRGK) and T313 contribute to the CoA site. Residues 389–391 (GEP), 413–418 (DTWWQT), D506, and R521 contribute to the ATP site. S529 provides a ligand contact to CoA. R532 is a binding site for ATP. Residues H545 and V548 each contribute to the Mg(2+) site. K619 is subject to N6-acetyllysine.

The protein belongs to the ATP-dependent AMP-binding enzyme family. Mg(2+) is required as a cofactor. Acetylated. Deacetylation by the SIR2-homolog deacetylase activates the enzyme.

The enzyme catalyses acetate + ATP + CoA = acetyl-CoA + AMP + diphosphate. In terms of biological role, catalyzes the conversion of acetate into acetyl-CoA (AcCoA), an essential intermediate at the junction of anabolic and catabolic pathways. AcsA undergoes a two-step reaction. In the first half reaction, AcsA combines acetate with ATP to form acetyl-adenylate (AcAMP) intermediate. In the second half reaction, it can then transfer the acetyl group from AcAMP to the sulfhydryl group of CoA, forming the product AcCoA. The polypeptide is Acetyl-coenzyme A synthetase (Wolinella succinogenes (strain ATCC 29543 / DSM 1740 / CCUG 13145 / JCM 31913 / LMG 7466 / NCTC 11488 / FDC 602W) (Vibrio succinogenes)).